The chain runs to 295 residues: Hepatic leukemia factor (295 aa).

Basic and acidic residues predominate over residues 36–52; it reads PEDAFSKEKDKGKKLDD. 2 disordered regions span residues 36-76 and 92-149; these read PEDA…TLPY and LSEN…SPIR. The 64-residue stretch at 225-288 folds into the bZIP domain; it reads DDKYWARRRK…GKCKNILAKY (64 aa). Residues 227–247 form a basic motif region; it reads KYWARRRKNNMAAKRSRDARR. The segment at 248–255 is leucine-zipper; the sequence is LKENQIAI.

Belongs to the bZIP family. PAR subfamily. In terms of assembly, binds DNA specifically as homodimer or heterodimer with other PAR factors.

The protein localises to the nucleus. This is Hepatic leukemia factor (Hlf) from Mus musculus (Mouse).